A 927-amino-acid polypeptide reads, in one-letter code: Translation initiation factor IF-2 (927 aa).

Residues 27–338 (LGLPVKSHAS…APKPVTERKF (312 aa)) form a disordered region. Residues 49-69 (SFSSSKTKAPTNSVQTNQGVK) are compositionally biased toward polar residues. Basic and acidic residues-rich tracts occupy residues 70-86 (TESK…DDKP) and 101-138 (FKAE…DRRH). Residues 146 to 159 (GNRNDNRQGQQNNR) are compositionally biased toward low complexity. Basic and acidic residues-rich tracts occupy residues 160–171 (NKNDGRYADHKQ), 202–226 (YSRH…EQEL), and 234–257 (AQEE…KEIV). The segment covering 300–316 (NWNNQNQVRNQRNSNWN) has biased composition (low complexity). Residues 428–597 (ERPPVVTIMG…LLVAEMEELK (170 aa)) form the tr-type G domain. A G1 region spans residues 437–444 (GHVDHGKT). 437-444 (GHVDHGKT) provides a ligand contact to GTP. The tract at residues 462-466 (GITQH) is G2. A G3 region spans residues 483–486 (DTPG). Residues 483–487 (DTPGH) and 537–540 (NKID) contribute to the GTP site. Residues 537–540 (NKID) are G4. The interval 573–575 (SAK) is G5.

Belongs to the TRAFAC class translation factor GTPase superfamily. Classic translation factor GTPase family. IF-2 subfamily.

It is found in the cytoplasm. In terms of biological role, one of the essential components for the initiation of protein synthesis. Protects formylmethionyl-tRNA from spontaneous hydrolysis and promotes its binding to the 30S ribosomal subunits. Also involved in the hydrolysis of GTP during the formation of the 70S ribosomal complex. The chain is Translation initiation factor IF-2 from Streptococcus agalactiae serotype Ia (strain ATCC 27591 / A909 / CDC SS700).